The following is a 606-amino-acid chain: 4-hydroxy-3-methylbut-2-en-1-yl diphosphate synthase (flavodoxin) (606 aa).

4 residues coordinate [4Fe-4S] cluster: cysteine 513, cysteine 516, cysteine 547, and glutamate 554.

The protein belongs to the IspG family. It depends on [4Fe-4S] cluster as a cofactor.

The catalysed reaction is (2E)-4-hydroxy-3-methylbut-2-enyl diphosphate + oxidized [flavodoxin] + H2O + 2 H(+) = 2-C-methyl-D-erythritol 2,4-cyclic diphosphate + reduced [flavodoxin]. It participates in isoprenoid biosynthesis; isopentenyl diphosphate biosynthesis via DXP pathway; isopentenyl diphosphate from 1-deoxy-D-xylulose 5-phosphate: step 5/6. Functionally, converts 2C-methyl-D-erythritol 2,4-cyclodiphosphate (ME-2,4cPP) into 1-hydroxy-2-methyl-2-(E)-butenyl 4-diphosphate. In Chlamydia abortus (strain DSM 27085 / S26/3) (Chlamydophila abortus), this protein is 4-hydroxy-3-methylbut-2-en-1-yl diphosphate synthase (flavodoxin).